The chain runs to 421 residues: Gamma-glutamyl phosphate reductase (421 aa).

It belongs to the gamma-glutamyl phosphate reductase family.

The protein resides in the cytoplasm. It catalyses the reaction L-glutamate 5-semialdehyde + phosphate + NADP(+) = L-glutamyl 5-phosphate + NADPH + H(+). It participates in amino-acid biosynthesis; L-proline biosynthesis; L-glutamate 5-semialdehyde from L-glutamate: step 2/2. Functionally, catalyzes the NADPH-dependent reduction of L-glutamate 5-phosphate into L-glutamate 5-semialdehyde and phosphate. The product spontaneously undergoes cyclization to form 1-pyrroline-5-carboxylate. The protein is Gamma-glutamyl phosphate reductase of Leifsonia xyli subsp. xyli (strain CTCB07).